Here is a 378-residue protein sequence, read N- to C-terminus: Uroporphyrinogen decarboxylase (378 aa).

Substrate-binding positions include 40-44 (RQAGR), D90, Y167, S222, and H355.

Belongs to the uroporphyrinogen decarboxylase family. As to quaternary structure, homodimer.

Its subcellular location is the cytoplasm. It carries out the reaction uroporphyrinogen III + 4 H(+) = coproporphyrinogen III + 4 CO2. Its pathway is porphyrin-containing compound metabolism; protoporphyrin-IX biosynthesis; coproporphyrinogen-III from 5-aminolevulinate: step 4/4. Functionally, catalyzes the decarboxylation of four acetate groups of uroporphyrinogen-III to yield coproporphyrinogen-III. This Psychrobacter cryohalolentis (strain ATCC BAA-1226 / DSM 17306 / VKM B-2378 / K5) protein is Uroporphyrinogen decarboxylase.